We begin with the raw amino-acid sequence, 266 residues long: Methionine aminopeptidase 1 (266 aa).

His-88 lines the substrate pocket. 3 residues coordinate a divalent metal cation: Asp-106, Asp-117, and His-186. His-193 contacts substrate. A divalent metal cation contacts are provided by Glu-219 and Glu-250.

Belongs to the peptidase M24A family. Methionine aminopeptidase type 1 subfamily. In terms of assembly, monomer. Co(2+) serves as cofactor. Zn(2+) is required as a cofactor. It depends on Mn(2+) as a cofactor. Requires Fe(2+) as cofactor.

The enzyme catalyses Release of N-terminal amino acids, preferentially methionine, from peptides and arylamides.. In terms of biological role, removes the N-terminal methionine from nascent proteins. The N-terminal methionine is often cleaved when the second residue in the primary sequence is small and uncharged (Met-Ala-, Cys, Gly, Pro, Ser, Thr, or Val). Requires deformylation of the N(alpha)-formylated initiator methionine before it can be hydrolyzed. This chain is Methionine aminopeptidase 1, found in Mycobacterium tuberculosis (strain CDC 1551 / Oshkosh).